Here is a 409-residue protein sequence, read N- to C-terminus: Astacin-like metalloendopeptidase (409 aa).

The first 19 residues, 1–19 (MDLKMLLIFIAFLLPSVLG), serve as a signal peptide directing secretion. Over residues 30–39 (TATTESTQVT) the composition is skewed to low complexity. The segment at 30–54 (TATTESTQVTTEEDIYDSPSPAETD) is disordered. The 199-residue stretch at 87–285 (SAINCRNCYW…AKINRLYNCS (199 aa)) folds into the Peptidase M12A domain. 5 disulfide bridges follow: C91–C94, C134–C284, C155–C175, C287–C313, and C339–C362. H183 is a Zn(2+) binding site. Residue E184 is part of the active site. 2 residues coordinate Zn(2+): H187 and H193. Residues 287–399 (CSTIIDAAFG…SGFQATFTSA (113 aa)) form the CUB domain.

It depends on Zn(2+) as a cofactor. In terms of tissue distribution, expressed in ovary and gonads.

The protein localises to the cytoplasm. Its subcellular location is the cell membrane. The protein resides in the cytoplasmic vesicle. It is found in the secretory vesicle. It localises to the cortical granule. Its function is as follows. Probable oocyte-specific oolemmal receptor involved in sperm and egg adhesion and fertilization. May act as a protease. This chain is Astacin-like metalloendopeptidase (ASTL), found in Gallus gallus (Chicken).